Consider the following 300-residue polypeptide: Protein XRI1 (300 aa).

As to quaternary structure, interacts (via C-terminal domain) with MIP1.

Its subcellular location is the nucleus. Required for mitotic division of the generative cell nucleus and the development of mature tricellular pollen grains, and for male and female meiosis. The chain is Protein XRI1 (XRI1) from Arabidopsis thaliana (Mouse-ear cress).